We begin with the raw amino-acid sequence, 1072 residues long: DNA-directed RNA polymerase subunit beta (1072 aa).

The protein belongs to the RNA polymerase beta chain family. In terms of assembly, in plastids the minimal PEP RNA polymerase catalytic core is composed of four subunits: alpha, beta, beta', and beta''. When a (nuclear-encoded) sigma factor is associated with the core the holoenzyme is formed, which can initiate transcription.

The protein resides in the plastid. It is found in the chloroplast. The enzyme catalyses RNA(n) + a ribonucleoside 5'-triphosphate = RNA(n+1) + diphosphate. Functionally, DNA-dependent RNA polymerase catalyzes the transcription of DNA into RNA using the four ribonucleoside triphosphates as substrates. This is DNA-directed RNA polymerase subunit beta from Barbarea verna (Land cress).